The chain runs to 642 residues: MPIITLPDGSQRQFDNPVSTMEVAQSIGPGLAKATIAGRVNGNRVDACDLIEEDASLEIITVKDEVDGLEIVRHSCAHLLGHALKQLYPQAKMAIGPTIDNGFYYDIDLDESLTQEDLEKIEKRMKELAKTKYEVVKKKVSWQEARDTFESRGEPYKVEILDENVSRDDRPGLYHHEEYIDMCRGPHVPNMGFCQHFTLLNVAGAYWRGNSDNKMLQRIYGTAFHDKKALKAHLTRLEEAAKRDHRKIGKQLDLFHMQQEAPGMVFWHHNGWSIFRDLEVFVRDKLNEYDYQEVKGPLMMDRVLWERSGHWDKYADAMFTTSSENREYAIKPMNCPGHVQIFNQGLKSYRDLPLRMAEFGSCHRNEPSGALHGIMRVRGFTQDDAHIFCTESQIQEEVTSCIKMVYDTYQTFGFDNIVVKLSTRPEKRVGSDEIWDQSEEALKQSLESMEIPYEIQEGEGAFYGPKIEFTLYDCLDRAWQCGTVQLDFNLPGRLGATYVGENNERLVPVMIHRAILGSLERFIGILIEEYAGFFPTWLAPEQAVLMNITDKQSGYVQEIVQKLQKSGIRAKADLRNEKIGFKIREHTLKRVPYMLVVGDQEMEAGEIAVRTRKGKDLGKFKVDDFIAYIQDEISSRKLNLEE.

The region spanning 1-61 is the TGS domain; sequence MPIITLPDGS…EEDASLEIIT (61 aa). Positions 244–535 are catalytic; the sequence is DHRKIGKQLD…LIEEYAGFFP (292 aa). Zn(2+) is bound by residues Cys335, His386, and His512.

Belongs to the class-II aminoacyl-tRNA synthetase family. Homodimer. It depends on Zn(2+) as a cofactor.

Its subcellular location is the cytoplasm. It catalyses the reaction tRNA(Thr) + L-threonine + ATP = L-threonyl-tRNA(Thr) + AMP + diphosphate + H(+). In terms of biological role, catalyzes the attachment of threonine to tRNA(Thr) in a two-step reaction: L-threonine is first activated by ATP to form Thr-AMP and then transferred to the acceptor end of tRNA(Thr). Also edits incorrectly charged L-seryl-tRNA(Thr). The polypeptide is Threonine--tRNA ligase (Vibrio parahaemolyticus serotype O3:K6 (strain RIMD 2210633)).